A 660-amino-acid polypeptide reads, in one-letter code: MRPRPILLLLLMFLPMLPAPPPGQPSGRRRGRRSGGSGGGFWGDRVDSQPFAIPYIHPTNPFAPDVTAAAGAGPRVRQPARPLGSAWRDQAQRPAVASRRRPTTAGAAPLTAVAPAHDTPPVPDVDSRGAILRRQYNLSTSPLTSSVATGTNLVLYAAPLSPLLPLQDGTNTHIMATEASNYAQYRVARATIRYRPLVPNAVGGYAISISFWPQTTTTPTSVDMNSITSTDVRILVQPGIASELVIPSERLHYRNQGWRSVETSGVAEEEATSGLVMLCIHGSLVNSYTNTPYTGALGLLDFALELEFRNLTPGNTNTRVSRYSSTARHRLRRGADGTAELTTTAATRFMKDLYFTSTNGVGEIGRGIALTLFNLADTLLGGLPTELISSAGGQLFYSRPVVSANGEPTVKLYTSVENAQQDKGIAIPHDIDLGESRVVIQDYDNQHEQDRPTPSPAPSRPFSVLRANDVLWLSLTAAEYDQSTYGSSTGPVYVSDSVTLVNVATGAQAVARSLDWTKVTLDGRPLSTIQQYSKTFFVLPLRGKLSFWEAGTTKAGYPYNYNTTASDQLLVENAAGHRVAISTYTTSLGAGPVSISAVAVLAPHSALALLEDTLDYPARAHTFDDFCPECRPLGLQGCAFQSTVAELQRLKMKVGKTREL.

The first 19 residues, 1–19 (MRPRPILLLLLMFLPMLPA), serve as a signal peptide directing secretion. 2 disordered regions span residues 18-43 (PAPP…GFWG) and 66-127 (VTAA…DVDS). Residues 28-33 (RRRGRR) carry the Nuclear localization signal motif. Positions 103 to 116 (TTAGAAPLTAVAPA) are enriched in low complexity. Residues N137 and N310 are each glycosylated (N-linked (GlcNAc...) asparagine; by host). Residues 368–394 (IALTLFNLADTLLGGLPTELISSAGGQ) are particle formation. N562 carries N-linked (GlcNAc...) asparagine; by host glycosylation. An oligomerization region spans residues 585–610 (TTSLGAGPVSISAVAVLAPHSALALL).

It belongs to the hepevirus capsid protein family. As to quaternary structure, homodimer. In terms of assembly, self-assembles to form the capsid. The capsid is dominated by dimers that define the 30 morphological units. Interacts with phosphorylated protein ORF3. Interacts with host TMEM134. Interacts with host ASGR1 and ASGR2; these interactions facilitate infection of host hepatocytes. Post-translationally, cleaved by host protease in the N-terminus. N-glycosylated. In terms of processing, not N-glycosylated. The C-terminus of the capsid protein ORF2 is truncated in non-enveloped virions shedded in feces, probably due to host proteases.

Its subcellular location is the secreted. It is found in the virion. It localises to the host cytoplasm. The protein localises to the host endoplasmic reticulum. The protein resides in the host Golgi apparatus. Its subcellular location is the host cell surface. It is found in the host nucleus. In terms of biological role, plays a role in the inhibition of host antibody-mediated neutralization without blocking viral cell entry. Forms an icosahedral capsid with a T=1 symmetry and a 34 nm diameter. The capsid is composed of 60 copies linked to each other. Binds to the 5' end of the genomic RNA to mediate genome encapsidation. Binds to heparin surface proteoglycans (HSPGs) to mediate viral entry. Additionally, the interactions with host ASGR1 and ASGR2 facilitate viral infection of hepatocytes. Inhibits IFN production by blocking host TBK1-induced IRF3 phosphorylation. The nuclear form probably modulates host gene expression. The chain is Pro-secreted protein ORF2 from Hepatitis E virus genotype 1 (isolate Human/Burma) (HEV-1).